We begin with the raw amino-acid sequence, 155 residues long: Large ribosomal subunit protein eL24 (155 aa).

Residues 87–155 (LELIKERRSQ…SFQKVKATSR (69 aa)) form a disordered region. The segment covering 89 to 129 (LIKERRSQKPSDRKAARDSKLAKDKEAKKAAKAARKAEKAK) has biased composition (basic and acidic residues). Low complexity predominate over residues 130–143 (AVASGASVVSKQQA).

Belongs to the eukaryotic ribosomal protein eL24 family. Component of the large ribosomal subunit. Mature ribosomes consist of a small (40S) and a large (60S) subunit. The 40S subunit contains about 32 different proteins and 1 molecule of RNA (18S). The 60S subunit contains 45 different proteins and 3 molecules of RNA (25S, 5.8S and 5S).

It is found in the cytoplasm. Component of the ribosome, a large ribonucleoprotein complex responsible for the synthesis of proteins in the cell. The small ribosomal subunit (SSU) binds messenger RNAs (mRNAs) and translates the encoded message by selecting cognate aminoacyl-transfer RNA (tRNA) molecules. The large subunit (LSU) contains the ribosomal catalytic site termed the peptidyl transferase center (PTC), which catalyzes the formation of peptide bonds, thereby polymerizing the amino acids delivered by tRNAs into a polypeptide chain. The nascent polypeptides leave the ribosome through a tunnel in the LSU and interact with protein factors that function in enzymatic processing, targeting, and the membrane insertion of nascent chains at the exit of the ribosomal tunnel. In Candida albicans (strain SC5314 / ATCC MYA-2876) (Yeast), this protein is Large ribosomal subunit protein eL24.